The primary structure comprises 588 residues: Adenine deaminase (588 aa).

It belongs to the metallo-dependent hydrolases superfamily. Adenine deaminase family. As to quaternary structure, homodimer. It depends on Mn(2+) as a cofactor.

The catalysed reaction is adenine + H2O + H(+) = hypoxanthine + NH4(+). This Escherichia coli O9:H4 (strain HS) protein is Adenine deaminase.